Consider the following 470-residue polypeptide: Pyruvate kinase I (470 aa).

Arginine 32 lines the substrate pocket. Positions 34, 36, 66, and 67 each coordinate K(+). 34–37 (NFSH) contributes to the ATP binding site. Positions 73 and 156 each coordinate ATP. A substrate-binding site is contributed by lysine 220. Glutamate 222 is a binding site for Mg(2+). The substrate site is built by glycine 245, aspartate 246, and threonine 278. A Mg(2+)-binding site is contributed by aspartate 246.

It belongs to the pyruvate kinase family. In terms of assembly, homotetramer. Mg(2+) serves as cofactor. The cofactor is K(+).

It carries out the reaction pyruvate + ATP = phosphoenolpyruvate + ADP + H(+). Its pathway is carbohydrate degradation; glycolysis; pyruvate from D-glyceraldehyde 3-phosphate: step 5/5. With respect to regulation, belongs to type I PK; fructose 1,6-bisphosphate-activated. In terms of biological role, catalyzes the formation of pyruvate in the last step of glycolysis, it is irreversible under physiological conditions. The reaction is critical for the control of metabolic flux in the second part of glycolysis. This chain is Pyruvate kinase I (pykF), found in Salmonella typhimurium (strain LT2 / SGSC1412 / ATCC 700720).